The primary structure comprises 1240 residues: DNA polymerase catalytic subunit (1240 aa).

A compositionally biased stretch (low complexity) spans 1–22 (MFCAAGGPASPGGKPAARAASG). Disordered stretches follow at residues 1–44 (MFCA…RRQN), 646–695 (GLDK…RETG), and 1103–1139 (AAAPGDEPAPPAALPSPAKRPRETPSHADPPGGASKP). Over residues 669 to 688 (NGDEDKDDDEDGDEDGDERE) the composition is skewed to acidic residues.

It belongs to the DNA polymerase type-B family. Forms a complex with the ssDNA-binding protein UL29, the DNA polymerase processivity factor, and the alkaline exonuclease. Interacts with the putative helicase-primase complex subunit UL8; this interaction may coordinate leading and lagging strand DNA synthesis at the replication fork.

The protein resides in the host nucleus. It catalyses the reaction DNA(n) + a 2'-deoxyribonucleoside 5'-triphosphate = DNA(n+1) + diphosphate. The catalysed reaction is Endonucleolytic cleavage to 5'-phosphomonoester.. Functionally, replicates viral genomic DNA. The replication complex is composed of six viral proteins: the DNA polymerase, processivity factor, primase, primase-associated factor, helicase, and ssDNA-binding protein. Additionally, the polymerase contains an intrinsic ribonuclease H (RNase H) activity that specifically degrades RNA/DNA heteroduplexes or duplex DNA substrates in the 5' to 3' direction. Therefore, it can catalyze the excision of the RNA primers that initiate the synthesis of Okazaki fragments at a replication fork during viral DNA replication. The chain is DNA polymerase catalytic subunit from Human herpesvirus 2 (strain HG52) (HHV-2).